The chain runs to 296 residues: GTPase Era (296 aa).

The 168-residue stretch at 7-174 folds into the Era-type G domain; the sequence is RAGFVAIVGR…LDEIAAGLPQ (168 aa). Positions 15–22 are G1; it reads GRPNVGKS. 15-22 contacts GTP; sequence GRPNVGKS. The G2 stretch occupies residues 41–45; that stretch reads QTTRH. The interval 62–65 is G3; the sequence is DTPG. Residues 62–66 and 123–126 contribute to the GTP site; these read DTPGF and SKID. Residues 123-126 form a G4 region; the sequence is SKID. Positions 153–155 are G5; the sequence is VSA. One can recognise a KH type-2 domain in the interval 205–281; it reads VGDELPYGCT…HLEIYIKVRK (77 aa).

This sequence belongs to the TRAFAC class TrmE-Era-EngA-EngB-Septin-like GTPase superfamily. Era GTPase family. Monomer.

The protein resides in the cytoplasm. Its subcellular location is the cell inner membrane. Functionally, an essential GTPase that binds both GDP and GTP, with rapid nucleotide exchange. Plays a role in 16S rRNA processing and 30S ribosomal subunit biogenesis and possibly also in cell cycle regulation and energy metabolism. In Bordetella parapertussis (strain 12822 / ATCC BAA-587 / NCTC 13253), this protein is GTPase Era.